A 102-amino-acid polypeptide reads, in one-letter code: NADH-quinone oxidoreductase subunit K (102 aa).

The next 3 helical transmembrane spans lie at 5–25 (IMHYLIVSALMFTIGIAGIFL), 31–51 (IIILMSIELILLSVNLNFVAF), and 66–86 (FILTVAAAEAAIGLAILVVFF).

This sequence belongs to the complex I subunit 4L family. As to quaternary structure, NDH-1 is composed of 14 different subunits. Subunits NuoA, H, J, K, L, M, N constitute the membrane sector of the complex.

It localises to the cell inner membrane. It catalyses the reaction a quinone + NADH + 5 H(+)(in) = a quinol + NAD(+) + 4 H(+)(out). Functionally, NDH-1 shuttles electrons from NADH, via FMN and iron-sulfur (Fe-S) centers, to quinones in the respiratory chain. The immediate electron acceptor for the enzyme in this species is believed to be ubiquinone. Couples the redox reaction to proton translocation (for every two electrons transferred, four hydrogen ions are translocated across the cytoplasmic membrane), and thus conserves the redox energy in a proton gradient. This is NADH-quinone oxidoreductase subunit K from Bartonella henselae (strain ATCC 49882 / DSM 28221 / CCUG 30454 / Houston 1) (Rochalimaea henselae).